Consider the following 155-residue polypeptide: Transcriptional regulator MraZ (155 aa).

SpoVT-AbrB domains lie at 15-62 and 93-136; these read TYEN…GMDR and SEEL…NPTA.

This sequence belongs to the MraZ family. Forms oligomers.

It is found in the cytoplasm. The protein resides in the nucleoid. In Rhodospirillum rubrum (strain ATCC 11170 / ATH 1.1.1 / DSM 467 / LMG 4362 / NCIMB 8255 / S1), this protein is Transcriptional regulator MraZ.